Here is a 298-residue protein sequence, read N- to C-terminus: PYK10-binding protein 1 (298 aa).

Alanine 2 is subject to N-acetylalanine. Jacalin-type lectin domains follow at residues 2–142 (AQKV…YFAP) and 152–295 (AKQL…HVRP). Serine 20 bears the Phosphoserine mark.

It belongs to the jacalin lectin family. Component of the PYK10 complex, at least composed of PYK10/BGLU23, BGLU21, BGLU22, JAL22, JAL23, PBP1/JAL30, PBP2/JAL31, JAL32, JAL33, JAL34, JAL35, GLL22 and GLL23. As to expression, expressed exclusively in roots.

It is found in the cytoplasm. In terms of biological role, inhibitor-type lectin that may regulate the correct polymerization of BGLU23/PYK10 upon tissue damage. Activates BGLU21, BGLU22 and BGLU23. In Arabidopsis thaliana (Mouse-ear cress), this protein is PYK10-binding protein 1 (PBP1).